Here is a 147-residue protein sequence, read N- to C-terminus: 3-hydroxyacyl-[acyl-carrier-protein] dehydratase FabZ (147 aa).

The active site involves His51.

It belongs to the thioester dehydratase family. FabZ subfamily.

The protein localises to the cytoplasm. It catalyses the reaction a (3R)-hydroxyacyl-[ACP] = a (2E)-enoyl-[ACP] + H2O. Functionally, involved in unsaturated fatty acids biosynthesis. Catalyzes the dehydration of short chain beta-hydroxyacyl-ACPs and long chain saturated and unsaturated beta-hydroxyacyl-ACPs. This is 3-hydroxyacyl-[acyl-carrier-protein] dehydratase FabZ from Anaplasma marginale (strain Florida).